A 359-amino-acid polypeptide reads, in one-letter code: Nicotinate-nucleotide--dimethylbenzimidazole phosphoribosyltransferase (359 aa).

Glu-318 functions as the Proton acceptor in the catalytic mechanism.

The protein belongs to the CobT family. As to quaternary structure, homodimer.

It carries out the reaction 5,6-dimethylbenzimidazole + nicotinate beta-D-ribonucleotide = alpha-ribazole 5'-phosphate + nicotinate + H(+). It participates in nucleoside biosynthesis; alpha-ribazole biosynthesis; alpha-ribazole from 5,6-dimethylbenzimidazole: step 1/2. Catalyzes the synthesis of alpha-ribazole-5'-phosphate from nicotinate mononucleotide (NAMN) and 5,6-dimethylbenzimidazole (DMB). The chain is Nicotinate-nucleotide--dimethylbenzimidazole phosphoribosyltransferase from Escherichia coli O157:H7.